The chain runs to 130 residues: Mitochondrial pyruvate carrier 1 (130 aa).

Transmembrane regions (helical) follow at residues 23 to 45 and 55 to 77; these read LKYI…IAAI and ISGP…ALSV.

Belongs to the mitochondrial pyruvate carrier (MPC) (TC 2.A.105) family. As to quaternary structure, the functional 150 kDa pyruvate import complex is a heteromer of MPC1 and either MPC2 or MPC3.

The protein localises to the mitochondrion. It is found in the mitochondrion inner membrane. Mediates the uptake of pyruvate into mitochondria. This is Mitochondrial pyruvate carrier 1 from Saccharomyces cerevisiae (strain ATCC 204508 / S288c) (Baker's yeast).